The primary structure comprises 687 residues: Glycine--tRNA ligase beta subunit (687 aa).

This sequence belongs to the class-II aminoacyl-tRNA synthetase family. In terms of assembly, tetramer of two alpha and two beta subunits.

It is found in the cytoplasm. The enzyme catalyses tRNA(Gly) + glycine + ATP = glycyl-tRNA(Gly) + AMP + diphosphate. This is Glycine--tRNA ligase beta subunit from Neisseria gonorrhoeae (strain NCCP11945).